The sequence spans 337 residues: MRVLGIETSCDETGIAIYDDKKGLLANQLYSQVKLHADYGGVVPELASRDHVRKTVPLIQAALKEAGLTASDIDAVAYTAGPGLVGALLVGATVGRSLAFAWNVPAIPVHHMEGHLLAPMLEDNPPEFPFVALLVSGGHTQLISVTGIGQYELLGESIDDAAGEAFDKTAKLLGLDYPGGPMLSKMASQGTAGRFVFPRPMTDRPGLDFSFSGLKTFAANTIRSNGGDEQTRADIARAFEDAVVDTLMIKCKRALESTGFKRLVMAGGVSANRTLRAKLAEMMQKRRGEVFYARPEFCTDNGAMIAYAGMVRFKAGVTADLGVTVRPRWPLAELPAA.

Fe cation contacts are provided by H111 and H115. Substrate-binding positions include 134–138 (LVSGG), D167, G180, and N272. Fe cation is bound at residue D300.

The protein belongs to the KAE1 / TsaD family. The cofactor is Fe(2+).

It localises to the cytoplasm. The enzyme catalyses L-threonylcarbamoyladenylate + adenosine(37) in tRNA = N(6)-L-threonylcarbamoyladenosine(37) in tRNA + AMP + H(+). Its function is as follows. Required for the formation of a threonylcarbamoyl group on adenosine at position 37 (t(6)A37) in tRNAs that read codons beginning with adenine. Is involved in the transfer of the threonylcarbamoyl moiety of threonylcarbamoyl-AMP (TC-AMP) to the N6 group of A37, together with TsaE and TsaB. TsaD likely plays a direct catalytic role in this reaction. This Salmonella agona (strain SL483) protein is tRNA N6-adenosine threonylcarbamoyltransferase.